A 198-amino-acid chain; its full sequence is Chromophore lyase CpcT/CpeT 3 (198 aa).

Belongs to the CpcT/CpeT biliprotein lyase family.

Functionally, covalently attaches a chromophore to Cys residue(s) of phycobiliproteins. This Synechococcus sp. (strain JA-3-3Ab) (Cyanobacteria bacterium Yellowstone A-Prime) protein is Chromophore lyase CpcT/CpeT 3.